The chain runs to 218 residues: Probable transaldolase (218 aa).

The Schiff-base intermediate with substrate role is filled by K83.

The protein belongs to the transaldolase family. Type 3B subfamily.

It is found in the cytoplasm. It catalyses the reaction D-sedoheptulose 7-phosphate + D-glyceraldehyde 3-phosphate = D-erythrose 4-phosphate + beta-D-fructose 6-phosphate. It functions in the pathway carbohydrate degradation; pentose phosphate pathway; D-glyceraldehyde 3-phosphate and beta-D-fructose 6-phosphate from D-ribose 5-phosphate and D-xylulose 5-phosphate (non-oxidative stage): step 2/3. In terms of biological role, transaldolase is important for the balance of metabolites in the pentose-phosphate pathway. The chain is Probable transaldolase from Thermotoga sp. (strain RQ2).